Consider the following 420-residue polypeptide: L-cysteine:1D-myo-inositol 2-amino-2-deoxy-alpha-D-glucopyranoside ligase (420 aa).

Residue cysteine 48 participates in Zn(2+) binding. L-cysteinyl-5'-AMP-binding positions include cysteine 48 to threonine 51, threonine 63, and asparagine 86 to threonine 88. Residues isoleucine 50 to histidine 60 carry the 'HIGH' region motif. The short motif at glutamate 192 to proline 197 is the 'ERGGDP' region element. Tryptophan 232 is a binding site for L-cysteinyl-5'-AMP. Cysteine 236 is a binding site for Zn(2+). Glycine 254 to aspartate 256 provides a ligand contact to L-cysteinyl-5'-AMP. Histidine 261 contacts Zn(2+). Isoleucine 288 is a binding site for L-cysteinyl-5'-AMP. Residues lysine 294–serine 298 carry the 'KMSKS' region motif.

Belongs to the class-I aminoacyl-tRNA synthetase family. MshC subfamily. In terms of assembly, monomer. Zn(2+) serves as cofactor.

It carries out the reaction 1D-myo-inositol 2-amino-2-deoxy-alpha-D-glucopyranoside + L-cysteine + ATP = 1D-myo-inositol 2-(L-cysteinylamino)-2-deoxy-alpha-D-glucopyranoside + AMP + diphosphate + H(+). Catalyzes the ATP-dependent condensation of GlcN-Ins and L-cysteine to form L-Cys-GlcN-Ins. The protein is L-cysteine:1D-myo-inositol 2-amino-2-deoxy-alpha-D-glucopyranoside ligase of Corynebacterium glutamicum (strain R).